The chain runs to 240 residues: ATP synthase subunit a (240 aa).

The next 5 membrane-spanning stretches (helical) occupy residues 21–41 (LSSM…AMLF), 83–103 (AVTL…FAII), 116–136 (DPTV…FYGV), 184–204 (LLGL…GAAI), and 207–227 (LIWQ…FVML).

The protein belongs to the ATPase A chain family. F-type ATPases have 2 components, CF(1) - the catalytic core - and CF(0) - the membrane proton channel. CF(1) has five subunits: alpha(3), beta(3), gamma(1), delta(1), epsilon(1). CF(0) has three main subunits: a(1), b(2) and c(9-12). The alpha and beta chains form an alternating ring which encloses part of the gamma chain. CF(1) is attached to CF(0) by a central stalk formed by the gamma and epsilon chains, while a peripheral stalk is formed by the delta and b chains.

The protein localises to the cell membrane. In terms of biological role, key component of the proton channel; it plays a direct role in the translocation of protons across the membrane. The protein is ATP synthase subunit a of Macrococcus caseolyticus (strain JCSC5402) (Macrococcoides caseolyticum).